Here is a 607-residue protein sequence, read N- to C-terminus: UvrABC system protein C (607 aa).

Residues 15–93 enclose the GIY-YIG domain; sequence RKPGVYRMLD…IKELKPPYNI (79 aa). A UVR domain is found at 203-238; that stretch reads REVADQLSTDMEAAAAALEFEKAALLRDQLAAIQAV. Over residues 542–551 the composition is skewed to basic residues; it reads HRARRGKARK. The tract at residues 542–561 is disordered; the sequence is HRARRGKARKQSTLDEIPGI.

It belongs to the UvrC family. In terms of assembly, interacts with UvrB in an incision complex.

Its subcellular location is the cytoplasm. In terms of biological role, the UvrABC repair system catalyzes the recognition and processing of DNA lesions. UvrC both incises the 5' and 3' sides of the lesion. The N-terminal half is responsible for the 3' incision and the C-terminal half is responsible for the 5' incision. In Alcanivorax borkumensis (strain ATCC 700651 / DSM 11573 / NCIMB 13689 / SK2), this protein is UvrABC system protein C.